Reading from the N-terminus, the 193-residue chain is Putative 3-methyladenine DNA glycosylase (193 aa).

Belongs to the DNA glycosylase MPG family.

The chain is Putative 3-methyladenine DNA glycosylase from Francisella tularensis subsp. tularensis (strain FSC 198).